The following is a 98-amino-acid chain: uncharacterized protein (98 aa).

The disordered stretch occupies residues 1-63; it reads MPRDKKLVHR…NGHSQPAIVA (63 aa). Residues 14 to 29 show a composition bias toward acidic residues; that stretch reads DVEDEDNDQREEEWSD. Polar residues predominate over residues 48-57; sequence EPSSASNGHS.

This is an uncharacterized protein from Aedes vexans (Inland floodwater mosquito).